The sequence spans 347 residues: Metacaspase-2 (347 aa).

The interval 1 to 70 is regulates substrate access to the active site; sequence MCSLITQLCD…QPWVATPLPG (70 aa). Residue His158 is part of the active site. Positions 173, 189, and 190 each coordinate Ca(2+). Cys213 is a catalytic residue. Residue Asp220 coordinates Ca(2+).

Belongs to the peptidase C14B family. In terms of assembly, monomer. Auto-proteolytic cleavage of the propeptide after Lys-55 and between the large and small subunits after Lys-268 is required for catalytic activity towards large protein substrates but is dispensable towards small oligopeptide substrates. After processing, the propeptide and the large and small subunits remain associated by non-covalent bonds. In vivo, the unprocessed enzyme appears to be the predominant form.

Its subcellular location is the recycling endosome. Its activity is regulated as follows. Activated by Ca(2+). In response to calcium binding, the 280-loop, the 280-loop, a disordered loop consisting of residues 269-275, undergoes a conformational change which stabilizes substrates in the active site. The binding to the substrate triggers the release of the N-terminal region resulting in the activation of the enzyme. Proteolytic cleavage is required for catalytic activity towards large protein substrates. Its function is as follows. Cysteine protease that cleaves specifically after arginine or lysine residues. This Trypanosoma brucei brucei protein is Metacaspase-2.